Consider the following 408-residue polypeptide: MRRFNWVLRHVQARRTFDSAIGLRQGSQKPLFERYIHATGINNSSARNYYDVLGVSPKATREEIKKSFHELAKKFHPDTNRNNPSAKRKFQEIREAYETLGNSERREEYDKLQYRNSDYVNNDGGDSERFRRAYQSNFSDTFHKIFSEIFENNQIKPDIRVELSLSLSEAAEGCTKRLSFDAYVFCDSCDGLGHPSDAAMSICPTCRGVGRVTIPPFTASCQTCKGTGHIIKEYCMSCRGSGIVEGTKTAELVIPGGVESEATITIVGAGNVSSRTSQPGNLYIKLKVANDSTFTRDGSDIYVDANISFTQAILGGKVVVPTLSGKIQLDIPKGTQPDQLLVLRGKGLPKQGFFVDHGDQYVRFRVNFPTEVNERQRAILEEFAKEEINNELSDSAEGSWLYQKLSTG.

A mitochondrion-targeting transit peptide spans 1–26 (MRRFNWVLRHVQARRTFDSAIGLRQG). One can recognise a J domain in the interval 48-113 (NYYDVLGVSP…ERREEYDKLQ (66 aa)). A CR-type zinc finger spans residues 173 to 247 (GCTKRLSFDA…CRGSGIVEGT (75 aa)). Positions 186, 189, 203, 206, 221, 224, 235, and 238 each coordinate Zn(2+). CXXCXGXG motif repeat units follow at residues 186–193 (CDSCDGLG), 203–210 (CPTCRGVG), 221–228 (CQTCKGTG), and 235–242 (CMSCRGSG).

This sequence belongs to the DnaJ family. B/II subfamily. In terms of assembly, homodimer. Zn(2+) is required as a cofactor. In terms of tissue distribution, ubiquitous.

It is found in the mitochondrion. In terms of biological role, plays a continuous role in plant development probably in the structural organization of compartments. The protein is Chaperone protein dnaJ 1, mitochondrial (ATJ1) of Arabidopsis thaliana (Mouse-ear cress).